Consider the following 680-residue polypeptide: Probable potassium transport system protein Kup (680 aa).

12 helical membrane-spanning segments follow: residues 16-36 (IAGMLITMGVVYGDIGTSPLY), 60-80 (ISLVFWTLMLMTTVKYVLIAL), 103-123 (WLVIPAIIGGATLLADGMLTP), 150-170 (EVIILTVTILSVLFFIQKFGT), 177-197 (FGPIMLIWFTFIGAIGVMNLM), 222-242 (VGILILGSVFLATTGAEALYS), 255-275 (SWPYIAACLVLNYFGQGVWLL), 302-322 (IPAILLATVAAIIASQALISG), 351-371 (LYISIVNWILWAVCLAVVFYF), 380-400 (AYGLAITITMLMTTILLFHYL), 407-427 (WFLAYVVLLFFGAIETIFFIA), and 432-452 (FMHGGYVTVLIAFVILFIMFV).

Belongs to the HAK/KUP transporter (TC 2.A.72) family.

The protein resides in the cell membrane. It catalyses the reaction K(+)(in) + H(+)(in) = K(+)(out) + H(+)(out). Its function is as follows. Transport of potassium into the cell. Likely operates as a K(+):H(+) symporter. The sequence is that of Probable potassium transport system protein Kup from Latilactobacillus sakei subsp. sakei (strain 23K) (Lactobacillus sakei subsp. sakei).